A 117-amino-acid polypeptide reads, in one-letter code: Nuclear transition protein 2 (117 aa).

The segment at 1-117 (MDTKMQSLPT…KRRSSGRRYK (117 aa)) is disordered. The span at 7-26 (SLPTTHPHPHSSSRPQSHTS) shows a compositional bias: low complexity. Zn(2+) contacts are provided by His12, His14, His16, His24, Cys32, Cys34, Cys38, and Cys41. Low complexity predominate over residues 44 to 53 (AGHAGSSSSP). 2 stretches are compositionally biased toward basic residues: residues 60-77 (KHPK…RPSH) and 93-117 (SKRK…RRYK). A Nuclear localization signal motif is present at residues 90–98 (GKVSKRKAV). Ser112 is modified (phosphoserine).

It belongs to the nuclear transition protein 2 family.

Its subcellular location is the nucleus. It localises to the chromosome. In terms of biological role, plays a key role in the replacement of histones to protamine in the elongating spermatids of mammals. In condensing spermatids, loaded onto the nucleosomes, where it promotes the recruitment and processing of protamines, which are responsible for histone eviction. The histone H2AB1-H2BC1/TH2B dimer is required for loading of TNP2 onto chromatin. The chain is Nuclear transition protein 2 from Mus musculus (Mouse).